Consider the following 265-residue polypeptide: Tryptophan synthase alpha chain (265 aa).

Active-site proton acceptor residues include Glu-48 and Asp-59.

It belongs to the TrpA family. Tetramer of two alpha and two beta chains.

The enzyme catalyses (1S,2R)-1-C-(indol-3-yl)glycerol 3-phosphate + L-serine = D-glyceraldehyde 3-phosphate + L-tryptophan + H2O. The protein operates within amino-acid biosynthesis; L-tryptophan biosynthesis; L-tryptophan from chorismate: step 5/5. In terms of biological role, the alpha subunit is responsible for the aldol cleavage of indoleglycerol phosphate to indole and glyceraldehyde 3-phosphate. The protein is Tryptophan synthase alpha chain of Pelagibacter ubique (strain HTCC1062).